Consider the following 110-residue polypeptide: Chorion class B protein M2410 (110 aa).

4 tandem repeats follow at residues 1–4 (YGGL), 5–9 (GYGGL), 10–14 (GYGGL), and 15–19 (GYGGL). Residues 1-19 (YGGLGYGGLGYGGLGYGGL) are 4 X 5 AA tandem repeats of G-Y-G-G-L. The segment at 1–27 (YGGLGYGGLGYGGLGYGGLGGGCGRGF) is left arm. Positions 28 to 96 (SGGGLPVATA…GNGDVGITRE (69 aa)) are central domain. The tract at residues 97–110 (GGLGYGAGYGGGYG) is right arm (Gly-rich tandem repeats).

It belongs to the chorion protein family.

In terms of biological role, this protein is one of many from the eggshell of the silk moth. The sequence is that of Chorion class B protein M2410 from Bombyx mori (Silk moth).